A 334-amino-acid chain; its full sequence is Holliday junction branch migration complex subunit RuvB (334 aa).

Residues 4 to 184 (ADRIISASPQ…FGIVQRLEFY (181 aa)) are large ATPase domain (RuvB-L). Residues Ile-23, Arg-24, Gly-65, Lys-68, Thr-69, Thr-70, 131–133 (EDY), Arg-174, Tyr-184, and Arg-221 contribute to the ATP site. Mg(2+) is bound at residue Thr-69. Positions 185–255 (NVDDLTSIVK…IAKQALVMLD (71 aa)) are small ATPAse domain (RuvB-S). Residues 258–334 (PQGFDFMDIK…YAHLGISLSE (77 aa)) form a head domain (RuvB-H) region. 3 residues coordinate DNA: Arg-294, Arg-313, and Arg-318.

It belongs to the RuvB family. As to quaternary structure, homohexamer. Forms an RuvA(8)-RuvB(12)-Holliday junction (HJ) complex. HJ DNA is sandwiched between 2 RuvA tetramers; dsDNA enters through RuvA and exits via RuvB. An RuvB hexamer assembles on each DNA strand where it exits the tetramer. Each RuvB hexamer is contacted by two RuvA subunits (via domain III) on 2 adjacent RuvB subunits; this complex drives branch migration. In the full resolvosome a probable DNA-RuvA(4)-RuvB(12)-RuvC(2) complex forms which resolves the HJ.

It is found in the cytoplasm. It catalyses the reaction ATP + H2O = ADP + phosphate + H(+). In terms of biological role, the RuvA-RuvB-RuvC complex processes Holliday junction (HJ) DNA during genetic recombination and DNA repair, while the RuvA-RuvB complex plays an important role in the rescue of blocked DNA replication forks via replication fork reversal (RFR). RuvA specifically binds to HJ cruciform DNA, conferring on it an open structure. The RuvB hexamer acts as an ATP-dependent pump, pulling dsDNA into and through the RuvAB complex. RuvB forms 2 homohexamers on either side of HJ DNA bound by 1 or 2 RuvA tetramers; 4 subunits per hexamer contact DNA at a time. Coordinated motions by a converter formed by DNA-disengaged RuvB subunits stimulates ATP hydrolysis and nucleotide exchange. Immobilization of the converter enables RuvB to convert the ATP-contained energy into a lever motion, pulling 2 nucleotides of DNA out of the RuvA tetramer per ATP hydrolyzed, thus driving DNA branch migration. The RuvB motors rotate together with the DNA substrate, which together with the progressing nucleotide cycle form the mechanistic basis for DNA recombination by continuous HJ branch migration. Branch migration allows RuvC to scan DNA until it finds its consensus sequence, where it cleaves and resolves cruciform DNA. This Haemophilus ducreyi (strain 35000HP / ATCC 700724) protein is Holliday junction branch migration complex subunit RuvB.